A 307-amino-acid chain; its full sequence is Dioxygenase cdmD (307 aa).

Histidine 146, aspartate 148, and histidine 226 together coordinate Fe cation.

This sequence belongs to the PhyH family. In terms of assembly, homodimer. Fe cation is required as a cofactor.

It catalyses the reaction verruculide A + 2-oxoglutarate + O2 = chrodrimanin T + succinate + CO2. The enzyme catalyses chrodrimanin E + 2-oxoglutarate + O2 = chrodrimanin A + succinate + CO2. It functions in the pathway secondary metabolite biosynthesis; terpenoid biosynthesis. Functionally, dioxygenase; part of the gene cluster that mediates the biosynthesis of chrodrimanin B, a meroterpenoid that acts as a potent blocker of insect GABA-gated chloride channels. The first step of the pathway is the biosynthesis of 6-hydroxymellein by the polyketide synthase cdmE. The prenyltransferase cdmH acts as a 6-hydroxymellein 5-farnesyltransferase and produces the hydrophobic metabolite verruculide C. The FAD-dependent monooxygenase cdmI further converts verruculide C into verruculide B. The terpene cyclase cdmG then produced the pentacyclic molecule 3-hydroxypentacecilide A, the backbone structure of chrodrimanin B, via folding the farnesyl moiety of the substrate into the chair-boat conformation. The short-chain dehydrogenase/reductase cdmF functions as the 3-OH dehydrogenase that oxidizes the C-3 hydroxyl group of 3-hydroxypentacecilide A and produces chrodrimanin C, the dehydrogenated product of 3-hydroxypentacecilide A. The cytochrome P450 monooxygenase cdmJ then accepts both 3-hydroxypentacecilide A and chrodrimanin C and functions as a C-7-beta-hydroxylase to produce respectively chrodrimanin H and chrodrimanin F. The dioxygenase cdmA accepts chrodrimanin H to afford chrodrimanin E, which is further transformed to chrodrimanin A by the dioxygenase cdmD. CdmA can also accept chrodrimanin C as substrate to convert it into verruculide A, which is further converted into chrodrimanin T by cdmD. The last step of the biosynthesis is proposed to be performed by the acetyltransferase cdmC which acetylates chrodrimanin A to yield chrodrimanin B. The pathway may also lead to the production of additional shunt products, including chrodrimanins T and U. The protein is Dioxygenase cdmD of Talaromyces verruculosus (Penicillium verruculosum).